Here is a 387-residue protein sequence, read N- to C-terminus: DNA double-strand break repair protein Mre11 (387 aa).

4 residues coordinate Mn(2+): Asp11, His13, Asp52, and Asp87. Residue His88 is the Proton donor of the active site. Mn(2+)-binding residues include His159, His190, and His192.

The protein belongs to the MRE11/RAD32 family. As to quaternary structure, homodimer. Forms a heterotetramer composed of two Mre11 subunits and two Rad50 subunits. Interacts with HerA. Mn(2+) serves as cofactor.

Its activity is regulated as follows. Nuclease activity is regulated by Rad50. Part of the Rad50/Mre11 complex, which is involved in the early steps of DNA double-strand break (DSB) repair. The complex may facilitate opening of the processed DNA ends to aid in the recruitment of HerA and NurA. Mre11 binds to DSB ends and has both double-stranded 3'-5' exonuclease activity and single-stranded endonuclease activity. The polypeptide is DNA double-strand break repair protein Mre11 (Sulfurisphaera tokodaii (strain DSM 16993 / JCM 10545 / NBRC 100140 / 7) (Sulfolobus tokodaii)).